The sequence spans 116 residues: Non-specific lipid-transfer protein C, cotyledon-specific isoform (116 aa).

The first 24 residues, 1 to 24, serve as a signal peptide directing secretion; sequence MKNVVFSVLLLLSFLFCLANTNEA. 4 cysteine pairs are disulfide-bonded: C28/C76, C38/C53, C54/C98, and C74/C112.

Belongs to the plant LTP family.

Its function is as follows. Plant non-specific lipid-transfer proteins transfer phospholipids as well as galactolipids across membranes. May play a role in wax or cutin deposition in the cell walls of expanding epidermal cells and certain secretory tissues. The chain is Non-specific lipid-transfer protein C, cotyledon-specific isoform from Ricinus communis (Castor bean).